A 130-amino-acid polypeptide reads, in one-letter code: Small ribosomal subunit protein uS9 (130 aa).

Belongs to the universal ribosomal protein uS9 family.

In Brevibacillus brevis (strain 47 / JCM 6285 / NBRC 100599), this protein is Small ribosomal subunit protein uS9.